The sequence spans 292 residues: NAD kinase (292 aa).

The active-site Proton acceptor is D73. NAD(+) contacts are provided by residues 73 to 74 (DG), 147 to 148 (NE), H158, R175, D177, 188 to 193 (TAYSLS), and Q247.

It belongs to the NAD kinase family. Requires a divalent metal cation as cofactor.

The protein resides in the cytoplasm. It catalyses the reaction NAD(+) + ATP = ADP + NADP(+) + H(+). Functionally, involved in the regulation of the intracellular balance of NAD and NADP, and is a key enzyme in the biosynthesis of NADP. Catalyzes specifically the phosphorylation on 2'-hydroxyl of the adenosine moiety of NAD to yield NADP. The protein is NAD kinase of Escherichia coli O157:H7.